The sequence spans 99 residues: Seminal vesicle secretory protein 6 (99 aa).

The N-terminal stretch at 1–21 (MSPTSFFLLTMLLVLVTETAA) is a signal peptide.

The protein belongs to the SVP2/SVP5/SVP6 family. In terms of tissue distribution, testis.

The protein resides in the secreted. It is found in the extracellular space. This chain is Seminal vesicle secretory protein 6 (Svs6), found in Mus musculus (Mouse).